The following is a 298-amino-acid chain: Ribosomal RNA small subunit methyltransferase H (298 aa).

S-adenosyl-L-methionine is bound by residues 35-37, Asp-55, Phe-82, Asp-100, and Gln-107; that span reads GGH.

The protein belongs to the methyltransferase superfamily. RsmH family.

It is found in the cytoplasm. The catalysed reaction is cytidine(1402) in 16S rRNA + S-adenosyl-L-methionine = N(4)-methylcytidine(1402) in 16S rRNA + S-adenosyl-L-homocysteine + H(+). Functionally, specifically methylates the N4 position of cytidine in position 1402 (C1402) of 16S rRNA. This Chlamydia abortus (strain DSM 27085 / S26/3) (Chlamydophila abortus) protein is Ribosomal RNA small subunit methyltransferase H.